A 485-amino-acid polypeptide reads, in one-letter code: Argininosuccinate lyase (485 aa).

This sequence belongs to the lyase 1 family. Argininosuccinate lyase subfamily.

It is found in the cytoplasm. The catalysed reaction is 2-(N(omega)-L-arginino)succinate = fumarate + L-arginine. It participates in amino-acid biosynthesis; L-arginine biosynthesis; L-arginine from L-ornithine and carbamoyl phosphate: step 3/3. The protein is Argininosuccinate lyase of Paracidovorax citrulli (strain AAC00-1) (Acidovorax citrulli).